A 358-amino-acid chain; its full sequence is Phosphoserine aminotransferase (358 aa).

Arginine 41 contacts L-glutamate. Pyridoxal 5'-phosphate-binding positions include 75–76, tryptophan 100, threonine 148, aspartate 167, and glutamine 190; that span reads AS. An N6-(pyridoxal phosphate)lysine modification is found at lysine 191. Position 233–234 (233–234) interacts with pyridoxal 5'-phosphate; it reads NT.

Belongs to the class-V pyridoxal-phosphate-dependent aminotransferase family. SerC subfamily. In terms of assembly, homodimer. Pyridoxal 5'-phosphate is required as a cofactor.

It is found in the cytoplasm. It catalyses the reaction O-phospho-L-serine + 2-oxoglutarate = 3-phosphooxypyruvate + L-glutamate. The enzyme catalyses 4-(phosphooxy)-L-threonine + 2-oxoglutarate = (R)-3-hydroxy-2-oxo-4-phosphooxybutanoate + L-glutamate. The protein operates within amino-acid biosynthesis; L-serine biosynthesis; L-serine from 3-phospho-D-glycerate: step 2/3. It functions in the pathway cofactor biosynthesis; pyridoxine 5'-phosphate biosynthesis; pyridoxine 5'-phosphate from D-erythrose 4-phosphate: step 3/5. Its function is as follows. Catalyzes the reversible conversion of 3-phosphohydroxypyruvate to phosphoserine and of 3-hydroxy-2-oxo-4-phosphonooxybutanoate to phosphohydroxythreonine. The chain is Phosphoserine aminotransferase from Campylobacter jejuni subsp. doylei (strain ATCC BAA-1458 / RM4099 / 269.97).